The following is a 154-amino-acid chain: Ribosome maturation factor RimP (154 aa).

This sequence belongs to the RimP family.

Its subcellular location is the cytoplasm. In terms of biological role, required for maturation of 30S ribosomal subunits. The chain is Ribosome maturation factor RimP from Deinococcus deserti (strain DSM 17065 / CIP 109153 / LMG 22923 / VCD115).